Here is a 901-residue protein sequence, read N- to C-terminus: MSILTRIFGSRNERVLRKLKKQVVKINKMEPAFEALSDDELKAKTQEFRDRLSGGETLQQILPEAFATVREASKRVLGMRHFDVQLIGGMVLTNRCIAEMRTGEGKTLTATLPCYLIALEGKGVHVVTVNDYLARRDAETNRPLFEFLGMSVGVNIPGLSPEEKRAAYAADITYATNSELGFDYLRDNLAHSKEERFQRTLGYALVDEVDSILIDEARTPLIISGQAENSSELYIAVNKLIPSLIKQEKEDTEEYQGEGDFTLDLKSKQAHLTERGQEKVEDWLITQGLMPEGDSLYSPSRIVLLHHVMAALRAHTLFEKDVDYIVKDGEIVIVDEHTGRTMAGRRWSDGLHQAIEAKEGVDVKSENQTVASISYQNYFRLYERLAGMTGTADTEAFEFQQIYGLETVVIPTNRPMIRDDRTDVMFENEQYKFNAIIEDIKDCVERQQPVLVGTISVEKSEELSKALDKAGIKHNVLNAKFHQQEAEIVAEAGFPSAVTIATNMAGRGTDIILGGNWKAQAAKLENPTQEQIEALKAEWEKNHEIVMKAGGLHIIGTERHESRRIDNQLRGRSGRQGDPGSSRFYLSLEDGLMRIYLNEGKLNLMRKAFTVAGEAMESKMLAKVIASAQAKVEAFHFDGRKNLLEYDDVANDQRHAIYEQRNHLLDNDDISETINAIRHDVFNGVIDQYIPPQSLEEQWDIKGLEERLSQEFGMELPISNWLEEDNNLHEESLCERIVEIAEKEYKEKEALVGEDAMRHFEKGVMLQTLDELWKEHLASMDYLRQGIHLRGYAQKDPKQEYKKESFRMFTEMLDSLKHQVITTLTRVRVRTQEEMEEAERARQEMAARINQNNLPVDENSQTTQNSETEDYSDRRIGRNEPCPCGSGKKYKHCHGSRVARQ.

ATP is bound by residues glutamine 85, 103-107, and aspartate 510; that span reads GEGKT. Residues 848–901 are disordered; it reads RINQNNLPVDENSQTTQNSETEDYSDRRIGRNEPCPCGSGKKYKHCHGSRVARQ. Positions 849 to 866 are enriched in polar residues; that stretch reads INQNNLPVDENSQTTQNS. Positions 882, 884, 893, and 894 each coordinate Zn(2+). Over residues 888-901 the composition is skewed to basic residues; it reads KKYKHCHGSRVARQ.

It belongs to the SecA family. Monomer and homodimer. Part of the essential Sec protein translocation apparatus which comprises SecA, SecYEG and auxiliary proteins SecDF-YajC and YidC. It depends on Zn(2+) as a cofactor.

The protein localises to the cell inner membrane. Its subcellular location is the cytoplasm. It carries out the reaction ATP + H2O + cellular proteinSide 1 = ADP + phosphate + cellular proteinSide 2.. Part of the Sec protein translocase complex. Interacts with the SecYEG preprotein conducting channel. Has a central role in coupling the hydrolysis of ATP to the transfer of proteins into and across the cell membrane, serving both as a receptor for the preprotein-SecB complex and as an ATP-driven molecular motor driving the stepwise translocation of polypeptide chains across the membrane. In Haemophilus influenzae (strain 86-028NP), this protein is Protein translocase subunit SecA.